The following is a 529-amino-acid chain: Glycylpeptide N-tetradecanoyltransferase (529 aa).

Polar residues predominate over residues 1–10; that stretch reads MSEQEGNQSE. The interval 1-65 is disordered; that stretch reads MSEQEGNQSE…ANPATKLTPS (65 aa). Residues 11 to 23 show a composition bias toward basic and acidic residues; the sequence is HQSEHVGESEGKL. A compositionally biased stretch (polar residues) spans 26 to 40; that stretch reads ETPTTSQSTNASTGT. Residues 118–121, 252–254, and 260–264 contribute to the tetradecanoyl-CoA site; these read FKFW, LCV, and SKRLT. Val529 functions as the Proton acceptor; via carboxylate in the catalytic mechanism.

It belongs to the NMT family. Monomer.

It is found in the cytoplasm. The catalysed reaction is N-terminal glycyl-[protein] + tetradecanoyl-CoA = N-tetradecanoylglycyl-[protein] + CoA + H(+). In terms of biological role, adds a myristoyl group to the N-terminal glycine residue of certain cellular proteins. The chain is Glycylpeptide N-tetradecanoyltransferase from Ajellomyces capsulatus (Darling's disease fungus).